Consider the following 175-residue polypeptide: Receptor activity-modifying protein 2 (175 aa).

An N-terminal signal peptide occupies residues M1–A42. At Q43 to E143 the chain is on the extracellular side. 2 cysteine pairs are disulfide-bonded: C68–C99 and C84–C131. N130 is a glycosylation site (N-linked (GlcNAc...) asparagine). A helical transmembrane segment spans residues D144–V165. Residues W166–A175 are Cytoplasmic-facing.

The protein belongs to the RAMP family. Heterodimer of CALCRL and RAMP2; the interaction forms the receptor complex for adrenomedullin/ADM. Heterodimer of CALCR and RAMP2; interaction forms the AMYR2 receptor complex for calcitonin/CALC and amylin/IAPP. In terms of tissue distribution, strongly expressed in lung, breast, immune system and fetal tissues.

The protein localises to the cell membrane. Functionally, accessory protein that interacts with and modulates the function of G-protein coupled receptors including calcitonin gene-related peptide type 1 receptor (CALCRL) and calcitonin receptor (CALCR). Required for the transport of CALCRL to the plasma membrane. Together with CALCRL, form a receptor complex for adrenomedullin/ADM. Together with CALCR, act as a receptor complex for calcitonin/CT/CALC. Together with CALCR, also act as a receptor complex for amylin/IAPP. The polypeptide is Receptor activity-modifying protein 2 (Homo sapiens (Human)).